The sequence spans 160 residues: Inorganic pyrophosphatase (160 aa).

Lys-16, Arg-28, and Tyr-40 together coordinate substrate. Mg(2+) is bound by residues Asp-50, Asp-55, and Asp-87. Residue Tyr-126 participates in substrate binding.

This sequence belongs to the PPase family. As to quaternary structure, homohexamer. Mg(2+) is required as a cofactor.

The protein localises to the cytoplasm. The enzyme catalyses diphosphate + H2O = 2 phosphate + H(+). Functionally, catalyzes the hydrolysis of inorganic pyrophosphate (PPi) forming two phosphate ions. This Nanoarchaeum equitans (strain Kin4-M) protein is Inorganic pyrophosphatase.